We begin with the raw amino-acid sequence, 206 residues long: Holliday junction branch migration complex subunit RuvA (206 aa).

The domain I stretch occupies residues 1 to 63; that stretch reads MIASLRGTVI…EDAMKLYGFI (63 aa). Residues 64–142 form a domain II region; the sequence is DNESREMFSV…AFAAGVVDEG (79 aa). Residues 143-153 are flexible linker; that stretch reads GEQISLPNANI. The domain III stretch occupies residues 154-206; that stretch reads ASEVVVEQVSQALVGLGFSEKQSDDAVSFVLAADPSLDTSGALRAALAKLSGK.

It belongs to the RuvA family. Homotetramer. Forms an RuvA(8)-RuvB(12)-Holliday junction (HJ) complex. HJ DNA is sandwiched between 2 RuvA tetramers; dsDNA enters through RuvA and exits via RuvB. An RuvB hexamer assembles on each DNA strand where it exits the tetramer. Each RuvB hexamer is contacted by two RuvA subunits (via domain III) on 2 adjacent RuvB subunits; this complex drives branch migration. In the full resolvosome a probable DNA-RuvA(4)-RuvB(12)-RuvC(2) complex forms which resolves the HJ.

Its subcellular location is the cytoplasm. In terms of biological role, the RuvA-RuvB-RuvC complex processes Holliday junction (HJ) DNA during genetic recombination and DNA repair, while the RuvA-RuvB complex plays an important role in the rescue of blocked DNA replication forks via replication fork reversal (RFR). RuvA specifically binds to HJ cruciform DNA, conferring on it an open structure. The RuvB hexamer acts as an ATP-dependent pump, pulling dsDNA into and through the RuvAB complex. HJ branch migration allows RuvC to scan DNA until it finds its consensus sequence, where it cleaves and resolves the cruciform DNA. The chain is Holliday junction branch migration complex subunit RuvA from Corynebacterium glutamicum (strain ATCC 13032 / DSM 20300 / JCM 1318 / BCRC 11384 / CCUG 27702 / LMG 3730 / NBRC 12168 / NCIMB 10025 / NRRL B-2784 / 534).